Consider the following 479-residue polypeptide: Sodium-coupled neutral amino acid transporter 5 (479 aa).

Residues 1–58 lie on the Cytoplasmic side of the membrane; the sequence is MAISCAVGMEMQEPKMNGTLSTGAAAGYRQEREGFLPTTHGPAPGRKPVQFLDFEGKT. The helical transmembrane segment at 59-81 threads the bilayer; sequence SFGMSVFNLSNAIMGSGILGLAY. At 82 to 97 the chain is on the extracellular side; that stretch reads AMAHTGVIFFLALLLC. The chain crosses the membrane as a helical span at residues 98–118; it reads IALLSSYSIHLLLTCASVVGI. The Cytoplasmic portion of the chain corresponds to 119-135; sequence RAYEQLGQRAFGPAGKV. A helical membrane pass occupies residues 136–156; it reads VVAIIICLHNVGAMSSYLFII. Residues 157–176 lie on the Extracellular side of the membrane; sequence KSELPLVIGTFLHMDPEGDW. A helical transmembrane segment spans residues 177-197; that stretch reads FLKGNLLIILVSLLIILPLAL. The Cytoplasmic segment spans residues 198 to 202; that stretch reads MKHLG. Residues 203-223 traverse the membrane as a helical segment; it reads YLGYTSSLSLTCMLFFLISVI. Topologically, residues 224–264 are extracellular; the sequence is YKKFQLGCVVSHNDTVVESEPAPLQAFNSSCEAKLFTVDSQ. Cysteine 231 and cysteine 254 form a disulfide bridge. Residue asparagine 236 is glycosylated (N-linked (GlcNAc...) asparagine). Residues 265-285 traverse the membrane as a helical segment; that stretch reads MSYTVPIMAFAFVCHPEVLPI. Topologically, residues 286–302 are cytoplasmic; it reads YTELCCPTQRRMQAVAN. Residues 303–323 traverse the membrane as a helical segment; sequence MSIGAMFIMYGLTATFGYLTF. At 324–341 the chain is on the extracellular side; the sequence is YSTVKAEMLEMYTQEDLL. A helical membrane pass occupies residues 342-362; the sequence is ILCVRLAVLLAVTLTVPVVLF. Residues 363-383 lie on the Cytoplasmic side of the membrane; it reads PIRRALQQLLFPSKAFSWPRH. The chain crosses the membrane as a helical span at residues 384 to 404; it reads VAIALILLILVNILVICVPTI. At 405–406 the chain is on the extracellular side; the sequence is RD. The chain crosses the membrane as a helical span at residues 407-427; sequence IFGFIGSTSAPSLIFILPSVF. At 428–446 the chain is on the cytoplasmic side; sequence YLRIVPADMEPLFSWPKIQ. The helical transmembrane segment at 447–467 threads the bilayer; sequence ALCFGVLGVLFMAISLGFMFA. The Extracellular segment spans residues 468-479; that stretch reads NWATGQSRMSGH.

It belongs to the amino acid/polyamine transporter 2 family. In terms of tissue distribution, highly expressed in neocortex, hippocampus, striatum and spinal cord by astrocytes (at protein level). Expressed in brain, lung, stomach, kidney, spleen and testis. Expressed in the cerebral cortex between the second and third postnatal week, where expressed exclusively in glial cells from postnatal day 14 to adulthood (at protein level). Expressed in the cerebellum at post natal day 12 (P12). Expressed in liver. Expressed inside the cell body of the astrocytes.

It localises to the cell membrane. It catalyses the reaction L-serine(out) + Na(+)(out) + H(+)(in) = L-serine(in) + Na(+)(in) + H(+)(out). The catalysed reaction is L-alanine(out) + Na(+)(out) + H(+)(in) = L-alanine(in) + Na(+)(in) + H(+)(out). The enzyme catalyses glycine(out) + Na(+)(out) + H(+)(in) = glycine(in) + Na(+)(in) + H(+)(out). It carries out the reaction L-glutamine(out) + Na(+)(out) + H(+)(in) = L-glutamine(in) + Na(+)(in) + H(+)(out). It catalyses the reaction L-asparagine(out) + Na(+)(out) + H(+)(in) = L-asparagine(in) + Na(+)(in) + H(+)(out). The catalysed reaction is L-histidine(out) + Na(+)(out) + H(+)(in) = L-histidine(in) + Na(+)(in) + H(+)(out). The enzyme catalyses L-cysteine(out) + Na(+)(out) + H(+)(in) = L-cysteine(in) + Na(+)(in) + H(+)(out). Its activity is regulated as follows. Not inhibited by lithium. Partial allosteric regulation on ions sodium binding. Symporter that cotransports neutral amino acids and sodium ions, coupled to an H(+) antiporter activity. Releases L-glutamine and glycine from astroglial cells and may participate in the glutamate/GABA-glutamine cycle and the NMDA receptors activation. In addition contributes significantly to L-glutamine uptake in retina, namely in ganglion and Mueller cells and, therefore participates in the retinal glutamate-glutamine cycle. The transport activity is pH sensitive, Li(+) tolerant, bidirectional and associated with large uncoupled fluxes of protons. The transport is electroneutral coupled to the cotransport of 1 Na(+) and the antiport of 1 H(+). May have particular importance for modulation of net hepatic glutamine flux. The chain is Sodium-coupled neutral amino acid transporter 5 from Rattus norvegicus (Rat).